A 327-amino-acid polypeptide reads, in one-letter code: Protoheme IX farnesyltransferase (327 aa).

The next 7 helical transmembrane spans lie at 55–75 (LVCT…LNCL), 101–121 (AAFV…VSGV), 124–144 (LAAG…TALL), 152–172 (IVVG…AATG), 180–200 (WLFA…ALLL), 237–257 (FLGI…ILPF), and 278–298 (AKGL…LLVM).

This sequence belongs to the UbiA prenyltransferase family. Protoheme IX farnesyltransferase subfamily.

Its subcellular location is the cell inner membrane. It carries out the reaction heme b + (2E,6E)-farnesyl diphosphate + H2O = Fe(II)-heme o + diphosphate. It participates in porphyrin-containing compound metabolism; heme O biosynthesis; heme O from protoheme: step 1/1. Functionally, converts heme B (protoheme IX) to heme O by substitution of the vinyl group on carbon 2 of heme B porphyrin ring with a hydroxyethyl farnesyl side group. The protein is Protoheme IX farnesyltransferase of Synechococcus sp. (strain CC9311).